Consider the following 72-residue polypeptide: Gas vesicle protein A (72 aa).

Belongs to the gas vesicle GvpA family. The gas vesicle shell is 2 nm thick and consists of a single layer of this protein. It forms helical ribs nearly perpendicular to the long axis of the vesicle.

Its subcellular location is the gas vesicle shell. Gas vesicles are hollow, gas filled proteinaceous nanostructures found in some microorganisms. During planktonic growth they allow positioning of the organism at a favorable depth for light or nutrient acquisition. GvpA forms the protein shell. This Synechococcus sp. (strain JA-3-3Ab) (Cyanobacteria bacterium Yellowstone A-Prime) protein is Gas vesicle protein A.